We begin with the raw amino-acid sequence, 382 residues long: Gap junction alpha-1 protein (382 aa).

Topologically, residues 2-23 (GDWSALGKLLDKVQAYSTAGGK) are cytoplasmic. Ser5 carries the post-translational modification Phosphoserine. A helical membrane pass occupies residues 24–44 (VWLSVLFIFRILLLGTAVESA). At 45–76 (WGDEQSAFRCNTQQPGCENVCYDKSFPISHVR) the chain is on the extracellular side. 2 cysteine pairs are disulfide-bonded: Cys54–Cys192 and Cys187–Cys198. The chain crosses the membrane as a helical span at residues 77–97 (FWVLQIIFVSVPTLLYLAHVF). Over 98–155 (YVMRKEEKLNKKEEELKVAQTDGVNVEMHLKQIEIKKFKYGIEEHGKVKMRGGLLRTY) the chain is Cytoplasmic. Lys144 participates in a covalent cross-link: Glycyl lysine isopeptide (Lys-Gly) (interchain with G-Cter in SUMO). The helical transmembrane segment at 156-176 (IISILFKSVFEVAFLLIQWYI) threads the bilayer. Residues 177–207 (YGFSLSAVYTCKRDPCPHQVDCFLSRPTEKT) are Extracellular-facing. The helical transmembrane segment at 208 to 228 (IFIIFMLVVSLVSLALNIIEL) threads the bilayer. At 229–382 (FYVFFKGVKD…SRPRPDDLEI (154 aa)) the chain is on the cytoplasmic side. Lys237 is covalently cross-linked (Glycyl lysine isopeptide (Lys-Gly) (interchain with G-Cter in SUMO)). The interaction with NOV stretch occupies residues 244-382 (SDPYHATTGP…SRPRPDDLEI (139 aa)). At Tyr247 the chain carries Phosphotyrosine. Phosphoserine is present on residues Ser255, Ser257, and Ser262. Positions 264–382 (KYAYFNGCSS…SRPRPDDLEI (119 aa)) are interaction with UBQLN4. Cys271 carries the post-translational modification S-nitrosocysteine. Thr275 carries the phosphothreonine modification. Ser306, Ser314, and Ser325 each carry phosphoserine. Residues 317-332 (QNRMGQAGSTISNSHA) show a composition bias toward polar residues. Residues 317-382 (QNRMGQAGST…SRPRPDDLEI (66 aa)) form a disordered region. Phosphothreonine is present on Thr326. 3 positions are modified to phosphoserine: Ser328, Ser330, and Ser365. Low complexity predominate over residues 362–374 (RPSSRASSRASSR). The residue at position 368 (Ser368) is a Phosphoserine; by PKC/PRKCG and PKC/PRKCD. Phosphoserine occurs at positions 369 and 373.

It belongs to the connexin family. Alpha-type (group II) subfamily. A connexon is composed of a hexamer of connexins. Interacts with SGSM3. Interacts with RIC1/CIP150. Interacts with CNST and CSNK1D. Interacts (via C-terminus) with TJP1. Interacts (via C-terminus) with SRC (via SH3 domain). Interacts (not ubiquitinated) with UBQLN4 (via UBA domain). Interacts with NOV. Interacts with TMEM65. Interacts with ANK3/ANKG and PKP2. Post-translationally, contains at least one intramolecular disulfide bond. Phosphorylation at Ser-325, Ser-328 and Ser-330 by CK1 modulates gap junction assembly. Phosphorylated at Ser-368 by PRKCG; phosphorylation induces disassembly of gap junction plaques and inhibition of gap junction activity. Phosphorylation at Ser-368 by PRKCD triggers its internalization into small vesicles leading to proteasome-mediated degradation. In terms of processing, sumoylated with SUMO1, SUMO2 and SUMO3, which may regulate the level of functional Cx43 gap junctions at the plasma membrane. May be desumoylated by SENP1 or SENP2. Post-translationally, S-nitrosylation at Cys-271 is enriched at the muscle endothelial gap junction in arteries, it augments channel permeability and may regulate of smooth muscle cell to endothelial cell communication. Acetylated in the developing cortex; leading to delocalization from the cell membrane. As to expression, detected in ventricle and atrium (at protein level).

The protein localises to the cell membrane. Its subcellular location is the cell junction. It is found in the gap junction. The protein resides in the endoplasmic reticulum. Its function is as follows. Gap junction protein that acts as a regulator of bladder capacity. A gap junction consists of a cluster of closely packed pairs of transmembrane channels, the connexons, through which materials of low MW diffuse from one cell to a neighboring cell. Negative regulator of bladder functional capacity: acts by enhancing intercellular electrical and chemical transmission, thus sensitizing bladder muscles to cholinergic neural stimuli and causing them to contract. May play a role in cell growth inhibition through the regulation of NOV expression and localization. Plays an essential role in gap junction communication in the ventricles. This is Gap junction alpha-1 protein (Gja1) from Rattus norvegicus (Rat).